Consider the following 273-residue polypeptide: NADPH-dependent 7-cyano-7-deazaguanine reductase (273 aa).

80–82 provides a ligand contact to substrate; the sequence is VES. 82–83 serves as a coordination point for NADPH; the sequence is SK. Residue cysteine 180 is the Thioimide intermediate of the active site. Aspartate 187 functions as the Proton donor in the catalytic mechanism. 219 to 220 serves as a coordination point for substrate; it reads HE. NADPH is bound at residue 248 to 249; that stretch reads RG.

The protein belongs to the GTP cyclohydrolase I family. QueF type 2 subfamily. As to quaternary structure, homodimer.

It is found in the cytoplasm. The enzyme catalyses 7-aminomethyl-7-carbaguanine + 2 NADP(+) = 7-cyano-7-deazaguanine + 2 NADPH + 3 H(+). Its pathway is tRNA modification; tRNA-queuosine biosynthesis. In terms of biological role, catalyzes the NADPH-dependent reduction of 7-cyano-7-deazaguanine (preQ0) to 7-aminomethyl-7-deazaguanine (preQ1). The protein is NADPH-dependent 7-cyano-7-deazaguanine reductase of Bordetella pertussis (strain Tohama I / ATCC BAA-589 / NCTC 13251).